The sequence spans 1050 residues: MDS1 and EVI1 complex locus protein EVI1-B (1050 aa).

C2H2-type zinc fingers lie at residues 21–48, 75–97, and 103–125; these read YHCE…GTPH, HECK…LLSH, and YKCD…QMSH. The segment at 131–155 adopts a C2H2-type 4; degenerate zinc-finger fold; sequence YECENCSKQVFTDPSNLQRHIRSQH. 2 consecutive C2H2-type zinc fingers follow at residues 161–183 and 189–211; these read HACS…KHIH and FVCE…KRMH. The C2H2-type 7; atypical zinc finger occupies 218-240; sequence IKCKDCGQMFSTTSSLNKHRRFC. Disordered regions lie at residues 371-421 and 529-612; these read ITEN…SDKD and PLKV…EKKD. Basic and acidic residues predominate over residues 379–390; that stretch reads RPHEKVSDHSES. Residues 397-411 are compositionally biased toward polar residues; sequence STPSGSDLETTSGSD. The short motif at 420-433 is the Nuclear localization signal element; sequence KDKLKENGKLYKDK. A compositionally biased stretch (basic and acidic residues) spans 529–542; sequence PLKVEPESPKESKK. A CTBP-binding motif 1 motif is present at residues 551–555; sequence AFDLT. Over residues 564-576 the composition is skewed to low complexity; sequence SPNAPSKSSAPTS. The CTBP-binding motif 2 signature appears at 582-586; that stretch reads PLDLS. Positions 588 to 598 are enriched in polar residues; it reads GSRSRATTTKQ. A compositionally biased stretch (basic and acidic residues) spans 599-612; that stretch reads TESRKNHIFGEKKD. C2H2-type zinc fingers lie at residues 731–753, 759–782, and 788–810; these read YTCR…LRTH, YRCK…RNIH, and FKCH…LKKH. Residues 928–951 form a disordered region; that stretch reads KSEVNCKVSPSRHDDDDDDEEEDF.

As to quaternary structure, homooligomer. Interacts with ctbp.

The protein resides in the nucleus. It localises to the nucleus speckle. Its function is as follows. Transcriptional repressor during pronephros development. Plays a role in regionalization of the pronephros; may promote formation of the distal tubule and duct over formation of the glomus and proximal tubule. The chain is MDS1 and EVI1 complex locus protein EVI1-B (mecom-b) from Xenopus laevis (African clawed frog).